The sequence spans 484 residues: MDDCSKDIINCLPDNLLCQILSNLSTKEAALTSLLSKRWRYLFALVPNLDFDVLPSLHPEVAMQDQDQTSFIDFVDRVLKLRGKDHINKFSLKCGDGIEDEDVFPWILNTLRHGVSDLSLHVSPSLVYWLPSKVFASKTLVRLKIGPKDGPRVKLRNVCLPKLKTLNLDSVVFEEGKIGFAKLLSGCPVLEELSLLNLAWDRWDSCSVSSKILKRLTLYCAHSSRNPKSVSFDTPNVVYFEYSDNIANKYPKVNFDSLVEASIGIRMTKVQKANARYVSDVDEETEMVGNATDLLMGICNVKTLYLSYDTLETLNLCCQVIPVFNNLTHLTIESHPELGWESLPNLLKSCPNLGTLVFQGLLHKATDRCGDVCMCQGLENSHSCLSSSPVKCLKILKFGETNDDDDMEIEMEQIKNFLEKMPNLEQLIIYYESSIDNDLVRVSSQLQEVPTVASLKCKIQVISDNLSLSSTLPISLSMENGFHL.

The 49-residue stretch at 6-54 (KDIINCLPDNLLCQILSNLSTKEAALTSLLSKRWRYLFALVPNLDFDVL) folds into the F-box domain. 5 LRR repeats span residues 144-170 (KIGP…NLDS), 172-197 (VFEE…SLLN), 205-234 (SCSV…SFDT), 303-334 (TLYL…TIES), and 335-360 (HPEL…VFQG).

In Arabidopsis thaliana (Mouse-ear cress), this protein is F-box/LRR-repeat protein At3g59210.